Reading from the N-terminus, the 1171-residue chain is DNA-directed RNA polymerase subunit beta (1171 aa).

It belongs to the RNA polymerase beta chain family. In terms of assembly, the RNAP catalytic core consists of 2 alpha, 1 beta, 1 beta' and 1 omega subunit. When a sigma factor is associated with the core the holoenzyme is formed, which can initiate transcription.

The enzyme catalyses RNA(n) + a ribonucleoside 5'-triphosphate = RNA(n+1) + diphosphate. In terms of biological role, DNA-dependent RNA polymerase catalyzes the transcription of DNA into RNA using the four ribonucleoside triphosphates as substrates. This is DNA-directed RNA polymerase subunit beta from Corynebacterium efficiens (strain DSM 44549 / YS-314 / AJ 12310 / JCM 11189 / NBRC 100395).